Here is a 288-residue protein sequence, read N- to C-terminus: Acetyl-coenzyme A carboxylase carboxyl transferase subunit beta (288 aa).

A CoA carboxyltransferase N-terminal domain is found at 34–288 (LFAKCPGCKQ…TLLSFHGGVQ (255 aa)). Residues C38, C41, C56, and C59 each contribute to the Zn(2+) site. Residues 38–59 (CPGCKQAIYQKDLGQAKICPNC) form a C4-type zinc finger.

This sequence belongs to the AccD/PCCB family. Acetyl-CoA carboxylase is a heterohexamer composed of biotin carboxyl carrier protein (AccB), biotin carboxylase (AccC) and two subunits each of ACCase subunit alpha (AccA) and ACCase subunit beta (AccD). Zn(2+) serves as cofactor.

The protein localises to the cytoplasm. The enzyme catalyses N(6)-carboxybiotinyl-L-lysyl-[protein] + acetyl-CoA = N(6)-biotinyl-L-lysyl-[protein] + malonyl-CoA. The protein operates within lipid metabolism; malonyl-CoA biosynthesis; malonyl-CoA from acetyl-CoA: step 1/1. In terms of biological role, component of the acetyl coenzyme A carboxylase (ACC) complex. Biotin carboxylase (BC) catalyzes the carboxylation of biotin on its carrier protein (BCCP) and then the CO(2) group is transferred by the transcarboxylase to acetyl-CoA to form malonyl-CoA. In Streptococcus thermophilus (strain CNRZ 1066), this protein is Acetyl-coenzyme A carboxylase carboxyl transferase subunit beta.